Reading from the N-terminus, the 699-residue chain is Elongation factor G (699 aa).

A tr-type G domain is found at E8–V290. Residues A17–T24, D88–H92, and N142–D145 contribute to the GTP site.

It belongs to the TRAFAC class translation factor GTPase superfamily. Classic translation factor GTPase family. EF-G/EF-2 subfamily.

It localises to the cytoplasm. In terms of biological role, catalyzes the GTP-dependent ribosomal translocation step during translation elongation. During this step, the ribosome changes from the pre-translocational (PRE) to the post-translocational (POST) state as the newly formed A-site-bound peptidyl-tRNA and P-site-bound deacylated tRNA move to the P and E sites, respectively. Catalyzes the coordinated movement of the two tRNA molecules, the mRNA and conformational changes in the ribosome. In Acidithiobacillus ferrooxidans (strain ATCC 23270 / DSM 14882 / CIP 104768 / NCIMB 8455) (Ferrobacillus ferrooxidans (strain ATCC 23270)), this protein is Elongation factor G.